A 492-amino-acid chain; its full sequence is Protein nucleotidyltransferase YdiU (492 aa).

ATP is bound by residues glycine 91, glycine 93, arginine 94, lysine 114, aspartate 126, glycine 127, arginine 180, and arginine 187. The active-site Proton acceptor is aspartate 256. Asparagine 257 and aspartate 266 together coordinate Mg(2+). ATP is bound at residue aspartate 266.

Belongs to the SELO family. Mg(2+) serves as cofactor. It depends on Mn(2+) as a cofactor.

It catalyses the reaction L-seryl-[protein] + ATP = 3-O-(5'-adenylyl)-L-seryl-[protein] + diphosphate. It carries out the reaction L-threonyl-[protein] + ATP = 3-O-(5'-adenylyl)-L-threonyl-[protein] + diphosphate. The catalysed reaction is L-tyrosyl-[protein] + ATP = O-(5'-adenylyl)-L-tyrosyl-[protein] + diphosphate. The enzyme catalyses L-histidyl-[protein] + UTP = N(tele)-(5'-uridylyl)-L-histidyl-[protein] + diphosphate. It catalyses the reaction L-seryl-[protein] + UTP = O-(5'-uridylyl)-L-seryl-[protein] + diphosphate. It carries out the reaction L-tyrosyl-[protein] + UTP = O-(5'-uridylyl)-L-tyrosyl-[protein] + diphosphate. Nucleotidyltransferase involved in the post-translational modification of proteins. It can catalyze the addition of adenosine monophosphate (AMP) or uridine monophosphate (UMP) to a protein, resulting in modifications known as AMPylation and UMPylation. The chain is Protein nucleotidyltransferase YdiU from Synechococcus sp. (strain ATCC 27144 / PCC 6301 / SAUG 1402/1) (Anacystis nidulans).